The primary structure comprises 309 residues: MEMO1 family protein C4H3.04c (309 aa).

This sequence belongs to the MEMO1 family.

In Schizosaccharomyces pombe (strain 972 / ATCC 24843) (Fission yeast), this protein is MEMO1 family protein C4H3.04c.